A 272-amino-acid polypeptide reads, in one-letter code: Indole-3-glycerol phosphate synthase (272 aa).

This sequence belongs to the TrpC family.

The enzyme catalyses 1-(2-carboxyphenylamino)-1-deoxy-D-ribulose 5-phosphate + H(+) = (1S,2R)-1-C-(indol-3-yl)glycerol 3-phosphate + CO2 + H2O. It functions in the pathway amino-acid biosynthesis; L-tryptophan biosynthesis; L-tryptophan from chorismate: step 4/5. The sequence is that of Indole-3-glycerol phosphate synthase from Mycolicibacterium vanbaalenii (strain DSM 7251 / JCM 13017 / BCRC 16820 / KCTC 9966 / NRRL B-24157 / PYR-1) (Mycobacterium vanbaalenii).